A 450-amino-acid chain; its full sequence is Signal recognition particle protein (450 aa).

Residues 106–113, 188–192, and 246–249 contribute to the GTP site; these read GLQGSGKT, DTAGR, and TKLD.

The protein belongs to the GTP-binding SRP family. SRP54 subfamily. As to quaternary structure, part of the signal recognition particle protein translocation system, which is composed of SRP and FtsY.

The protein resides in the cytoplasm. The catalysed reaction is GTP + H2O = GDP + phosphate + H(+). Functionally, involved in targeting and insertion of nascent membrane proteins into the cytoplasmic membrane. Binds to the hydrophobic signal sequence of the ribosome-nascent chain (RNC) as it emerges from the ribosomes. The SRP-RNC complex is then targeted to the cytoplasmic membrane where it interacts with the SRP receptor FtsY. This chain is Signal recognition particle protein, found in Mycoplasma pneumoniae (strain ATCC 29342 / M129 / Subtype 1) (Mycoplasmoides pneumoniae).